We begin with the raw amino-acid sequence, 242 residues long: Biosynthetic peptidoglycan transglycosylase (242 aa).

A helical membrane pass occupies residues L12–P31.

This sequence belongs to the glycosyltransferase 51 family.

It is found in the cell inner membrane. It catalyses the reaction [GlcNAc-(1-&gt;4)-Mur2Ac(oyl-L-Ala-gamma-D-Glu-L-Lys-D-Ala-D-Ala)](n)-di-trans,octa-cis-undecaprenyl diphosphate + beta-D-GlcNAc-(1-&gt;4)-Mur2Ac(oyl-L-Ala-gamma-D-Glu-L-Lys-D-Ala-D-Ala)-di-trans,octa-cis-undecaprenyl diphosphate = [GlcNAc-(1-&gt;4)-Mur2Ac(oyl-L-Ala-gamma-D-Glu-L-Lys-D-Ala-D-Ala)](n+1)-di-trans,octa-cis-undecaprenyl diphosphate + di-trans,octa-cis-undecaprenyl diphosphate + H(+). It functions in the pathway cell wall biogenesis; peptidoglycan biosynthesis. Functionally, peptidoglycan polymerase that catalyzes glycan chain elongation from lipid-linked precursors. In Ectopseudomonas mendocina (strain ymp) (Pseudomonas mendocina), this protein is Biosynthetic peptidoglycan transglycosylase.